The sequence spans 271 residues: Monalysin (271 aa).

A propeptide spanning residues 1–33 is cleaved from the precursor; that stretch reads MTIKEELGQPQSHSIELDEVSKEAASTRAALTS. The pore-forming domain stretch occupies residues 102 to 170; it reads IPQNVTTTLS…FTDTTEMKGP (69 aa).

In terms of assembly, pro-Monalysin forms a stable donut-like 18-mer complex composed of two disk-shaped nonamers held together by N-terminal swapping of the pro-peptides. After proteolytic cleavage, the inactive 18-mer complex probably dissociates into two disk-shaped active nonamers in which the transmembrane segments are unmasked and ready to engage the conformational change leading to the pore formation into the target membrane. Multimerizes into circular-like structures and barrel-like aggregates. In terms of processing, requires N-terminal cleavage to become fully active. The metalloprotease AprA can induce the rapid cleavage of pro-Monalysin into its active form. Can also be processed by trypsin.

It localises to the secreted. The protein localises to the host cell membrane. Pore-forming toxin that contributes to the virulence of P.entomophila against Drosophila, playing an important role in host intestinal damage and lethality. Displays cytolytic and hemolytic activity. This chain is Monalysin, found in Pseudomonas entomophila (strain L48).